A 212-amino-acid chain; its full sequence is Ropporin-1 (212 aa).

Positions 12 to 43 (PELPELLKQFTKDAIRTQPPDLIQWAAEYFGA) constitute an RIIa domain. At Ser-56 the chain carries Phosphoserine. The tract at residues 209-212 (VRLE) is interaction with RHPN1.

This sequence belongs to the ropporin family. In terms of assembly, homodimer. Interacts with AKAP3. May interact with SPA17. Interacts with RHPN1. Interacts with FSCB; the interaction increases upon spermatozoa capacitation conditions. Interacts with CFAP61. In terms of processing, sumoylated, sumoylation decreases upon spermatozoa capacitation conditions. As to expression, testis-specific. Present in the most inner parts of seminiferous tubules (at protein level).

The protein localises to the cell projection. Its subcellular location is the cilium. The protein resides in the flagellum. Its function is as follows. Important for male fertility. With ROPN1L, involved in fibrous sheath integrity and sperm motility, plays a role in PKA-dependent signaling processes required for spermatozoa capacitation. This chain is Ropporin-1 (Ropn1), found in Mus musculus (Mouse).